A 234-amino-acid chain; its full sequence is Peptidyl-tRNA hydrolase (234 aa).

Tyr-14 contributes to the tRNA binding site. His-19 (proton acceptor) is an active-site residue. The tRNA site is built by Phe-64, Asn-66, and Asn-112. The segment at 187-234 (TGTKADEEKPKPAKSHIHQARNGVQPKKLPETGPMAEMLKKMFGPKKD) is disordered.

This sequence belongs to the PTH family. In terms of assembly, monomer.

The protein localises to the cytoplasm. The enzyme catalyses an N-acyl-L-alpha-aminoacyl-tRNA + H2O = an N-acyl-L-amino acid + a tRNA + H(+). Its function is as follows. Hydrolyzes ribosome-free peptidyl-tRNAs (with 1 or more amino acids incorporated), which drop off the ribosome during protein synthesis, or as a result of ribosome stalling. Catalyzes the release of premature peptidyl moieties from peptidyl-tRNA molecules trapped in stalled 50S ribosomal subunits, and thus maintains levels of free tRNAs and 50S ribosomes. The chain is Peptidyl-tRNA hydrolase from Allorhizobium ampelinum (strain ATCC BAA-846 / DSM 112012 / S4) (Agrobacterium vitis (strain S4)).